Reading from the N-terminus, the 216-residue chain is Adenylate kinase (216 aa).

Gly-10 to Thr-15 contacts ATP. Residues Ser-30 to Val-59 form an NMP region. AMP is bound by residues Thr-31, Arg-36, Lys-57–Val-59, Gly-85–Arg-88, and Gln-92. Residues Gly-122–Asp-159 form an LID region. Residues Arg-123 and Ile-132–Tyr-133 contribute to the ATP site. Residues Arg-156 and Arg-167 each coordinate AMP. Arg-200 provides a ligand contact to ATP.

It belongs to the adenylate kinase family. Monomer.

It localises to the cytoplasm. It carries out the reaction AMP + ATP = 2 ADP. The protein operates within purine metabolism; AMP biosynthesis via salvage pathway; AMP from ADP: step 1/1. Functionally, catalyzes the reversible transfer of the terminal phosphate group between ATP and AMP. Plays an important role in cellular energy homeostasis and in adenine nucleotide metabolism. This chain is Adenylate kinase, found in Hamiltonella defensa subsp. Acyrthosiphon pisum (strain 5AT).